Reading from the N-terminus, the 839-residue chain is Probable E3 ubiquitin-protein ligase HUL4 (839 aa).

Residues 497-839 (QQKDLKKSLR…LEESQGYGFR (343 aa)) enclose the HECT domain. The active-site Glycyl thioester intermediate is the C807.

Belongs to the HUL4 family. Component of the TRAMP complex.

The protein localises to the nucleus. It catalyses the reaction S-ubiquitinyl-[E2 ubiquitin-conjugating enzyme]-L-cysteine + [acceptor protein]-L-lysine = [E2 ubiquitin-conjugating enzyme]-L-cysteine + N(6)-ubiquitinyl-[acceptor protein]-L-lysine.. In terms of biological role, probable E3 ubiquitin-protein ligase, component of the TRAMP complex which has a poly(A) RNA polymerase activity and is involved in a post-transcriptional quality control mechanism limiting inappropriate expression of genetic information. Polyadenylation is required for the degradative activity of the exosome on several of its nuclear RNA substrates. This chain is Probable E3 ubiquitin-protein ligase HUL4 (HUL4), found in Eremothecium gossypii (strain ATCC 10895 / CBS 109.51 / FGSC 9923 / NRRL Y-1056) (Yeast).